The sequence spans 618 residues: Proline--tRNA ligase (618 aa).

The protein belongs to the class-II aminoacyl-tRNA synthetase family. ProS type 1 subfamily. In terms of assembly, homodimer.

It is found in the cytoplasm. The enzyme catalyses tRNA(Pro) + L-proline + ATP = L-prolyl-tRNA(Pro) + AMP + diphosphate. In terms of biological role, catalyzes the attachment of proline to tRNA(Pro) in a two-step reaction: proline is first activated by ATP to form Pro-AMP and then transferred to the acceptor end of tRNA(Pro). As ProRS can inadvertently accommodate and process non-cognate amino acids such as alanine and cysteine, to avoid such errors it has two additional distinct editing activities against alanine. One activity is designated as 'pretransfer' editing and involves the tRNA(Pro)-independent hydrolysis of activated Ala-AMP. The other activity is designated 'posttransfer' editing and involves deacylation of mischarged Ala-tRNA(Pro). The misacylated Cys-tRNA(Pro) is not edited by ProRS. In Streptococcus pyogenes serotype M12 (strain MGAS2096), this protein is Proline--tRNA ligase.